A 124-amino-acid polypeptide reads, in one-letter code: Small ribosomal subunit protein uS12 (124 aa).

Asp-89 carries the post-translational modification 3-methylthioaspartic acid.

The protein belongs to the universal ribosomal protein uS12 family. In terms of assembly, part of the 30S ribosomal subunit. Contacts proteins S8 and S17. May interact with IF1 in the 30S initiation complex.

Functionally, with S4 and S5 plays an important role in translational accuracy. Its function is as follows. Interacts with and stabilizes bases of the 16S rRNA that are involved in tRNA selection in the A site and with the mRNA backbone. Located at the interface of the 30S and 50S subunits, it traverses the body of the 30S subunit contacting proteins on the other side and probably holding the rRNA structure together. The combined cluster of proteins S8, S12 and S17 appears to hold together the shoulder and platform of the 30S subunit. The protein is Small ribosomal subunit protein uS12 of Hamiltonella defensa subsp. Acyrthosiphon pisum (strain 5AT).